The primary structure comprises 205 residues: Endothelial cell-specific chemotaxis regulator (205 aa).

An N-terminal signal peptide occupies residues 1-24 (MGTAGAMQLCWVILGFLLFRGHNS). Residues 25–124 (QPTMTQTSSS…TSETVLTVAA (100 aa)) are Extracellular-facing. Composition is skewed to polar residues over residues 49–71 (SSNPGYIPSSEANRPSHLSSTGT) and 86–101 (SRDTFQTVPPNSTTMS). The disordered stretch occupies residues 49-101 (SSNPGYIPSSEANRPSHLSSTGTPGAGVPSSGRDGGTSRDTFQTVPPNSTTMS). The chain crosses the membrane as a helical span at residues 125 to 145 (FGVISFIVILVVVVIILVGVV). Residues 146-205 (SLRFKCRKSKESEDPQKPGSSGLSESCSTANGEKDSITLISMKNINMNNGKQSLSAEKVL) lie on the Cytoplasmic side of the membrane. Residues 153–175 (KSKESEDPQKPGSSGLSESCSTA) are disordered. Residues 163–175 (PGSSGLSESCSTA) show a composition bias toward polar residues. Phosphoserine is present on Ser198.

Belongs to the ECSCR family. Interacts with FLNA. Interacts with the 20S proteasome subunit PSMA7. In terms of processing, may be heavily O-glycosylated. In terms of tissue distribution, highest expression in endothelial cells. Also detected in vascular smooth muscle, macrophages, lymphocytes, and mast cells.

Its subcellular location is the cell membrane. It localises to the cytoplasm. Its function is as follows. Regulates endothelial chemotaxis and tube formation. Has a role in angiogenesis and apoptosis via modulation of the actin cytoskeleton and facilitation of proteasomal degradation of the apoptosis inhibitors BIRC3/IAP1 and BIRC2/IAP2. This chain is Endothelial cell-specific chemotaxis regulator (ECSCR), found in Homo sapiens (Human).